Consider the following 342-residue polypeptide: S-adenosylmethionine:tRNA ribosyltransferase-isomerase (342 aa).

It belongs to the QueA family. Monomer.

It localises to the cytoplasm. The enzyme catalyses 7-aminomethyl-7-carbaguanosine(34) in tRNA + S-adenosyl-L-methionine = epoxyqueuosine(34) in tRNA + adenine + L-methionine + 2 H(+). The protein operates within tRNA modification; tRNA-queuosine biosynthesis. Functionally, transfers and isomerizes the ribose moiety from AdoMet to the 7-aminomethyl group of 7-deazaguanine (preQ1-tRNA) to give epoxyqueuosine (oQ-tRNA). This is S-adenosylmethionine:tRNA ribosyltransferase-isomerase from Bacillus velezensis (strain DSM 23117 / BGSC 10A6 / LMG 26770 / FZB42) (Bacillus amyloliquefaciens subsp. plantarum).